We begin with the raw amino-acid sequence, 200 residues long: Large ribosomal subunit protein bL25 (200 aa).

This sequence belongs to the bacterial ribosomal protein bL25 family. CTC subfamily. In terms of assembly, part of the 50S ribosomal subunit; part of the 5S rRNA/L5/L18/L25 subcomplex. Contacts the 5S rRNA. Binds to the 5S rRNA independently of L5 and L18.

In terms of biological role, this is one of the proteins that binds to the 5S RNA in the ribosome where it forms part of the central protuberance. In Nocardia farcinica (strain IFM 10152), this protein is Large ribosomal subunit protein bL25.